Here is a 460-residue protein sequence, read N- to C-terminus: Inactive ubiquitin carboxyl-terminal hydrolase MINDY-4B (460 aa).

The interval 41 to 76 (TNNSTPQNHEGNHTSADENEDGTGLSQPKGQGHLPS) is disordered.

This sequence belongs to the MINDY deubiquitinase family. FAM188 subfamily.

In Homo sapiens (Human), this protein is Inactive ubiquitin carboxyl-terminal hydrolase MINDY-4B.